We begin with the raw amino-acid sequence, 366 residues long: Erythronate-4-phosphate dehydrogenase (366 aa).

Substrate contacts are provided by S46 and T67. NAD(+) is bound by residues D147 and T175. R208 is an active-site residue. D228 is a binding site for NAD(+). Residue E233 is part of the active site. H250 (proton donor) is an active-site residue. G253 serves as a coordination point for NAD(+). Y254 provides a ligand contact to substrate.

It belongs to the D-isomer specific 2-hydroxyacid dehydrogenase family. PdxB subfamily. As to quaternary structure, homodimer.

The protein resides in the cytoplasm. It carries out the reaction 4-phospho-D-erythronate + NAD(+) = (R)-3-hydroxy-2-oxo-4-phosphooxybutanoate + NADH + H(+). It functions in the pathway cofactor biosynthesis; pyridoxine 5'-phosphate biosynthesis; pyridoxine 5'-phosphate from D-erythrose 4-phosphate: step 2/5. Functionally, catalyzes the oxidation of erythronate-4-phosphate to 3-hydroxy-2-oxo-4-phosphonooxybutanoate. The chain is Erythronate-4-phosphate dehydrogenase from Coxiella burnetii (strain Dugway 5J108-111).